We begin with the raw amino-acid sequence, 60 residues long: uncharacterized protein (60 aa).

This is an uncharacterized protein from Archaeoglobus fulgidus (strain ATCC 49558 / DSM 4304 / JCM 9628 / NBRC 100126 / VC-16).